The primary structure comprises 374 residues: uncharacterized protein (374 aa).

Positions 1-23 (MDSKWFFIVLISFLLVLPSIVTP) are cleaved as a signal peptide. Residues 66-374 (SSSSSSSSSS…SSSSSSSGEN (309 aa)) are disordered.

Its subcellular location is the secreted. This is an uncharacterized protein from Dictyostelium discoideum (Social amoeba).